Consider the following 244-residue polypeptide: Phosphoadenosine 5'-phosphosulfate reductase (244 aa).

Residue Cys239 is the Nucleophile; cysteine thiosulfonate intermediate of the active site.

Belongs to the PAPS reductase family. CysH subfamily.

The protein localises to the cytoplasm. The enzyme catalyses [thioredoxin]-disulfide + sulfite + adenosine 3',5'-bisphosphate + 2 H(+) = [thioredoxin]-dithiol + 3'-phosphoadenylyl sulfate. Its pathway is sulfur metabolism; hydrogen sulfide biosynthesis; sulfite from sulfate: step 3/3. Catalyzes the formation of sulfite from phosphoadenosine 5'-phosphosulfate (PAPS) using thioredoxin as an electron donor. This chain is Phosphoadenosine 5'-phosphosulfate reductase, found in Cronobacter sakazakii (strain ATCC BAA-894) (Enterobacter sakazakii).